Reading from the N-terminus, the 369-residue chain is DNA replication and repair protein RecF (369 aa).

ATP is bound at residue 30–37; it reads GPNGSGKT.

This sequence belongs to the RecF family.

The protein resides in the cytoplasm. Functionally, the RecF protein is involved in DNA metabolism; it is required for DNA replication and normal SOS inducibility. RecF binds preferentially to single-stranded, linear DNA. It also seems to bind ATP. This is DNA replication and repair protein RecF from Chlorobium luteolum (strain DSM 273 / BCRC 81028 / 2530) (Pelodictyon luteolum).